The chain runs to 84 residues: Defensin-like protein 172 (84 aa).

Positions 1–23 (MAKASSTLVLSIIFLVMFALVEQ) are cleaved as a signal peptide. 4 disulfides stabilise this stretch: C27–C74, C34–C56, C40–C68, and C44–C70.

This sequence belongs to the DEFL family.

The protein resides in the secreted. The polypeptide is Defensin-like protein 172 (LCR60) (Arabidopsis thaliana (Mouse-ear cress)).